The chain runs to 293 residues: Ribosomal RNA small subunit methyltransferase A (293 aa).

The S-adenosyl-L-methionine site is built by N38, V40, G65, E86, D116, and N133.

Belongs to the class I-like SAM-binding methyltransferase superfamily. rRNA adenine N(6)-methyltransferase family. RsmA subfamily.

The protein localises to the cytoplasm. It carries out the reaction adenosine(1518)/adenosine(1519) in 16S rRNA + 4 S-adenosyl-L-methionine = N(6)-dimethyladenosine(1518)/N(6)-dimethyladenosine(1519) in 16S rRNA + 4 S-adenosyl-L-homocysteine + 4 H(+). Functionally, specifically dimethylates two adjacent adenosines (A1518 and A1519) in the loop of a conserved hairpin near the 3'-end of 16S rRNA in the 30S particle. May play a critical role in biogenesis of 30S subunits. The protein is Ribosomal RNA small subunit methyltransferase A of Paenarthrobacter aurescens (strain TC1).